The following is a 152-amino-acid chain: uncharacterized protein (152 aa).

One can recognise a VOC domain in the interval 7–133 (PALSPHLVVD…FGHHWSLGQP (127 aa)).

This is an uncharacterized protein from Mycobacterium bovis (strain ATCC BAA-935 / AF2122/97).